A 584-amino-acid chain; its full sequence is A-type ATP synthase subunit A (584 aa).

233–240 (GPFGSGKT) contacts ATP.

Belongs to the ATPase alpha/beta chains family. Has multiple subunits with at least A(3), B(3), C, D, E, F, H, I and proteolipid K(x).

It localises to the cell membrane. The enzyme catalyses ATP + H2O + 4 H(+)(in) = ADP + phosphate + 5 H(+)(out). Its function is as follows. Component of the A-type ATP synthase that produces ATP from ADP in the presence of a proton gradient across the membrane. The A chain is the catalytic subunit. The protein is A-type ATP synthase subunit A of Methanothermobacter thermautotrophicus (strain ATCC 29096 / DSM 1053 / JCM 10044 / NBRC 100330 / Delta H) (Methanobacterium thermoautotrophicum).